The chain runs to 489 residues: Betaine aldehyde dehydrogenase (489 aa).

K(+) is bound by residues Thr26 and Asp93. 150-152 (GAW) is a binding site for NAD(+). The active-site Charge relay system is Lys162. 176-179 (KPSE) provides a ligand contact to NAD(+). Val180 is a K(+) binding site. Residue 229–232 (GVET) participates in NAD(+) binding. Leu245 serves as a coordination point for K(+). The Proton acceptor role is filled by Glu251. Positions 253, 285, and 386 each coordinate NAD(+). Cys285 (nucleophile) is an active-site residue. Cys285 is modified (cysteine sulfenic acid (-SOH)). Positions 456 and 459 each coordinate K(+). Glu463 serves as the catalytic Charge relay system.

It belongs to the aldehyde dehydrogenase family. In terms of assembly, dimer of dimers. K(+) serves as cofactor.

It catalyses the reaction betaine aldehyde + NAD(+) + H2O = glycine betaine + NADH + 2 H(+). It participates in amine and polyamine biosynthesis; betaine biosynthesis via choline pathway; betaine from betaine aldehyde: step 1/1. Involved in the biosynthesis of the osmoprotectant glycine betaine. Catalyzes the irreversible oxidation of betaine aldehyde to the corresponding acid. The chain is Betaine aldehyde dehydrogenase from Paraburkholderia phymatum (strain DSM 17167 / CIP 108236 / LMG 21445 / STM815) (Burkholderia phymatum).